The primary structure comprises 418 residues: Putative competence-damage inducible protein (418 aa).

This sequence belongs to the CinA family.

This chain is Putative competence-damage inducible protein, found in Streptococcus pneumoniae (strain JJA).